The sequence spans 299 residues: MTTITLIRGALTNWREYLVLCKPRIVSLIVFTAIVGMFLSVPDLAPWRVFLFGTLGIGLGAASAAAINHLIDEKADAVMNRTQGRPLPTGKLSREQALAFAITLGLSSMIILYFLVNPLTAWLTLASMIGYGIIYTAFLKPATPQNIVLGGASGAMPPVLGWAAVTGELHVHAFLLFLIIFVWTPPHFWALALARREEYSRTKYPMLPVTHGVDFTKQQIVLYTFLLFAVSLLPFVSHMSGLLYLVGAIGLGGRFVYLTIVLYRNTSNELAMKTFGYSIVYLAALFAFLLVDHYLPKFL.

The next 8 membrane-spanning stretches (helical) occupy residues 25–45 (IVSL…PDLA), 51–71 (LFGT…NHLI), 97–117 (ALAF…FLVN), 119–139 (LTAW…TAFL), 147–167 (IVLG…AVTG), 173–193 (AFLL…ALAL), 225–245 (FLLF…LLYL), and 275–295 (FGYS…DHYL).

The protein belongs to the UbiA prenyltransferase family. Protoheme IX farnesyltransferase subfamily.

The protein localises to the cell inner membrane. It carries out the reaction heme b + (2E,6E)-farnesyl diphosphate + H2O = Fe(II)-heme o + diphosphate. It participates in porphyrin-containing compound metabolism; heme O biosynthesis; heme O from protoheme: step 1/1. Converts heme B (protoheme IX) to heme O by substitution of the vinyl group on carbon 2 of heme B porphyrin ring with a hydroxyethyl farnesyl side group. This chain is Protoheme IX farnesyltransferase, found in Nitrosococcus oceani (strain ATCC 19707 / BCRC 17464 / JCM 30415 / NCIMB 11848 / C-107).